The chain runs to 536 residues: Maintenance of mitochondrial morphology protein 1 (536 aa).

Residues methionine 1–glycine 25 lie on the Lumenal side of the membrane. The helical transmembrane segment at leucine 26–phenylalanine 46 threads the bilayer. Topologically, residues glycine 47–threonine 536 are cytoplasmic. Disordered stretches follow at residues histidine 52 to proline 135, glycine 275 to alanine 331, glycine 416 to methionine 467, and tyrosine 505 to threonine 536. 3 stretches are compositionally biased toward polar residues: residues tyrosine 69 to arginine 81, serine 88 to serine 105, and tyrosine 112 to serine 121. The span at lysine 122–serine 132 shows a compositional bias: basic residues. Residues glutamine 134–proline 409 enclose the SMP-LTD domain. The segment covering threonine 321 to alanine 331 has biased composition (low complexity). Gly residues-rich tracts occupy residues threonine 442–methionine 467 and glycine 507–arginine 517.

Belongs to the MMM1 family. As to quaternary structure, homodimer. Component of the ER-mitochondria encounter structure (ERMES) or MDM complex, composed of MMM1, MDM10, MDM12 and MDM34. An MMM1 homodimer associates with one molecule of MDM12 on each side in a pairwise head-to-tail manner, and the SMP-LTD domains of MMM1 and MDM12 generate a continuous hydrophobic tunnel for phospholipid trafficking.

It localises to the endoplasmic reticulum membrane. In terms of biological role, component of the ERMES/MDM complex, which serves as a molecular tether to connect the endoplasmic reticulum (ER) and mitochondria. Components of this complex are involved in the control of mitochondrial shape and protein biogenesis, and function in nonvesicular lipid trafficking between the ER and mitochondria. The MDM12-MMM1 subcomplex functions in the major beta-barrel assembly pathway that is responsible for biogenesis of all outer membrane beta-barrel proteins, and acts in a late step after the SAM complex. The MDM10-MDM12-MMM1 subcomplex further acts in the TOM40-specific pathway after the action of the MDM12-MMM1 complex. Essential for establishing and maintaining the structure of mitochondria and maintenance of mtDNA nucleoids. The chain is Maintenance of mitochondrial morphology protein 1 from Ajellomyces dermatitidis (strain ER-3 / ATCC MYA-2586) (Blastomyces dermatitidis).